The following is a 98-amino-acid chain: Cysteine-rich and transmembrane domain-containing protein WIH2 (98 aa).

Positions 1–77 are disordered; it reads MSQYNQPPVG…PPQHQQQQSS (77 aa). A compositionally biased stretch (pro residues) spans 9–21; the sequence is VGVPPPQGYPPEG. Low complexity predominate over residues 37–55; the sequence is YPQQGYPPQGYPQQGYPQQ. Over residues 56–70 the composition is skewed to pro residues; sequence GYPPPYAPQYPPPPQ. A helical transmembrane segment spans residues 75–92; that stretch reads QSSPGFLEGCLAALCCCC.

Belongs to the CYSTM1 family. In terms of tissue distribution, expressed in floral organ primordia.

Its subcellular location is the membrane. Its function is as follows. Required for the promotion of megasporogenesis, or promotion of germ cell formation from somatic precursor cells. Acts redundantly with WIH1. Functions in a genetic pathway downstream of SPL/NZZ and WUS and together with TRN2 in promoting megasporogenesis. The sequence is that of Cysteine-rich and transmembrane domain-containing protein WIH2 from Arabidopsis thaliana (Mouse-ear cress).